The following is a 204-amino-acid chain: Urease accessory protein UreG (204 aa).

A GTP-binding site is contributed by 12-19 (GPVGSGKT).

Belongs to the SIMIBI class G3E GTPase family. UreG subfamily. As to quaternary structure, homodimer. UreD, UreF and UreG form a complex that acts as a GTP-hydrolysis-dependent molecular chaperone, activating the urease apoprotein by helping to assemble the nickel containing metallocenter of UreC. The UreE protein probably delivers the nickel.

The protein resides in the cytoplasm. In terms of biological role, facilitates the functional incorporation of the urease nickel metallocenter. This process requires GTP hydrolysis, probably effectuated by UreG. In Streptococcus salivarius (strain 57.I), this protein is Urease accessory protein UreG.